A 380-amino-acid chain; its full sequence is Chaperone protein DnaJ (380 aa).

Residues 5-70 (DYYEVLGLQK…EKRAAYDQYG (66 aa)) enclose the J domain. The segment at 136-214 (GCKKDIRIST…CHGDGRVQKA (79 aa)) adopts a CR-type zinc-finger fold. Residues Cys-149, Cys-152, Cys-166, Cys-169, Cys-188, Cys-191, Cys-202, and Cys-205 each coordinate Zn(2+). CXXCXGXG motif repeat units follow at residues 149–156 (CDTCHGSG), 166–173 (CSHCHGSG), 188–195 (CPSCHGSG), and 202–209 (CKSCHGDG).

This sequence belongs to the DnaJ family. In terms of assembly, homodimer. The cofactor is Zn(2+).

The protein localises to the cytoplasm. Participates actively in the response to hyperosmotic and heat shock by preventing the aggregation of stress-denatured proteins and by disaggregating proteins, also in an autonomous, DnaK-independent fashion. Unfolded proteins bind initially to DnaJ; upon interaction with the DnaJ-bound protein, DnaK hydrolyzes its bound ATP, resulting in the formation of a stable complex. GrpE releases ADP from DnaK; ATP binding to DnaK triggers the release of the substrate protein, thus completing the reaction cycle. Several rounds of ATP-dependent interactions between DnaJ, DnaK and GrpE are required for fully efficient folding. Also involved, together with DnaK and GrpE, in the DNA replication of plasmids through activation of initiation proteins. This chain is Chaperone protein DnaJ, found in Actinobacillus pleuropneumoniae serotype 5b (strain L20).